A 230-amino-acid polypeptide reads, in one-letter code: ATP synthase subunit a (230 aa).

5 helical membrane-spanning segments follow: residues 17–37 (LPIT…FIMA), 78–98 (IFPF…IGVI), 107–127 (DLSV…WFGI), 165–187 (LFGN…GFLV), and 198–218 (EAII…AGGI).

The protein belongs to the ATPase A chain family. F-type ATPases have 2 components, CF(1) - the catalytic core - and CF(0) - the membrane proton channel. CF(1) has five subunits: alpha(3), beta(3), gamma(1), delta(1), epsilon(1). CF(0) has three main subunits: a(1), b(2) and c(9-12). The alpha and beta chains form an alternating ring which encloses part of the gamma chain. CF(1) is attached to CF(0) by a central stalk formed by the gamma and epsilon chains, while a peripheral stalk is formed by the delta and b chains.

The protein localises to the cell inner membrane. Functionally, key component of the proton channel; it plays a direct role in the translocation of protons across the membrane. This is ATP synthase subunit a from Legionella pneumophila (strain Corby).